A 37-amino-acid polypeptide reads, in one-letter code: Large ribosomal subunit protein bL36c (37 aa).

The protein belongs to the bacterial ribosomal protein bL36 family.

Its subcellular location is the plastid. It is found in the chloroplast. The chain is Large ribosomal subunit protein bL36c from Staurastrum punctulatum (Green alga).